We begin with the raw amino-acid sequence, 343 residues long: NAD-dependent deacetylase sir2E (343 aa).

The Deacetylase sirtuin-type domain occupies Y27–E300. H152 functions as the Proton acceptor in the catalytic mechanism. Zn(2+) contacts are provided by C160, C165, C200, and C203.

It belongs to the sirtuin family.

The protein resides in the nucleus. It catalyses the reaction N(6)-acetyl-L-lysyl-[protein] + NAD(+) + H2O = 2''-O-acetyl-ADP-D-ribose + nicotinamide + L-lysyl-[protein]. In terms of biological role, NAD-dependent deacetylase, which plays an important role in the regulation of transcriptional repression. May play a role in cell cycle. When overexpressed, the cell cycle is accelerated. The protein is NAD-dependent deacetylase sir2E (sir2E) of Dictyostelium discoideum (Social amoeba).